The primary structure comprises 457 residues: MTKKVYVKTFGCQMNEYDSDKMVDVLNAAEGLEKTDSPEDADIILFNTCSVREKAQEKVFSDLGRVRELKEAKPDLLIGVGGCVASQEGASIVSRAPYVDLVFGPQTLHRLPQMIDARRTSGRAQVDITFPEIEKFDHLPPARVEGPTAFVSIMEGCSKYCSYCVVPYTRGDEVSRPLDDVLTEVAGLADQGVREVTLLGQNVNAYRGALTAGSSEVADFATLIEYVADIPGIERIRYTTSHPKEFTQRLIDTYAKVPKLVNHLHLPVQHGSDRILMAMKRGYTVLEYKSVIRKLRAIRPDLSLSTDLIVGFPGETEEDFDKMMALVHDMRYDTSFSFIYSPRPGTPAANLHDDTPRDVKLKRLQLVQATIEENVARISQSMVGKVERILVEGPSRKDPNELAGRTENNRVVNFPAPLAAHPRLIGQMIDVKINHAYPHSLRGELVLVSDDASAATH.

In terms of domain architecture, MTTase N-terminal spans 3 to 120; it reads KKVYVKTFGC…LPQMIDARRT (118 aa). [4Fe-4S] cluster-binding residues include cysteine 12, cysteine 49, cysteine 83, cysteine 157, cysteine 161, and cysteine 164. Residues 143-377 enclose the Radical SAM core domain; that stretch reads RVEGPTAFVS…QATIEENVAR (235 aa). The region spanning 380–447 is the TRAM domain; it reads QSMVGKVERI…PHSLRGELVL (68 aa).

Belongs to the methylthiotransferase family. MiaB subfamily. Monomer. Requires [4Fe-4S] cluster as cofactor.

It localises to the cytoplasm. It carries out the reaction N(6)-dimethylallyladenosine(37) in tRNA + (sulfur carrier)-SH + AH2 + 2 S-adenosyl-L-methionine = 2-methylsulfanyl-N(6)-dimethylallyladenosine(37) in tRNA + (sulfur carrier)-H + 5'-deoxyadenosine + L-methionine + A + S-adenosyl-L-homocysteine + 2 H(+). Its function is as follows. Catalyzes the methylthiolation of N6-(dimethylallyl)adenosine (i(6)A), leading to the formation of 2-methylthio-N6-(dimethylallyl)adenosine (ms(2)i(6)A) at position 37 in tRNAs that read codons beginning with uridine. This Burkholderia multivorans (strain ATCC 17616 / 249) protein is tRNA-2-methylthio-N(6)-dimethylallyladenosine synthase.